A 275-amino-acid chain; its full sequence is NADH-quinone oxidoreductase subunit E 1 (275 aa).

[2Fe-2S] cluster-binding residues include Cys99, Cys104, Cys140, and Cys144. Residues 200-275 (LQAPEPVEEK…DKSKPAKKPR (76 aa)) are disordered. Basic and acidic residues predominate over residues 206-221 (VEEKKSVRASKAKDEQ). Positions 231-242 (AKPSTATDVTNP) are enriched in polar residues. The segment covering 243–256 (TLKTPATARKAAAK) has biased composition (low complexity). Residues 258-269 (VKIEGETVDKSK) are compositionally biased toward basic and acidic residues.

It belongs to the complex I 24 kDa subunit family. [2Fe-2S] cluster is required as a cofactor.

The enzyme catalyses a quinone + NADH + 5 H(+)(in) = a quinol + NAD(+) + 4 H(+)(out). In terms of biological role, NDH-1 shuttles electrons from NADH, via FMN and iron-sulfur (Fe-S) centers, to quinones in the respiratory chain. The immediate electron acceptor for the enzyme in this species is believed to be ubiquinone. Couples the redox reaction to proton translocation (for every two electrons transferred, four hydrogen ions are translocated across the cytoplasmic membrane), and thus conserves the redox energy in a proton gradient. The polypeptide is NADH-quinone oxidoreductase subunit E 1 (nuoE1) (Rhizobium meliloti (strain 1021) (Ensifer meliloti)).